Reading from the N-terminus, the 656-residue chain is L-type lectin-domain containing receptor kinase S.1 (656 aa).

A signal peptide spans 1-29; it reads MSWQWRRRQWPSPLLLILIVLHLVSSSSA. Residues 30–273 are legume-lectin like; sequence IDFLYNSFSS…ARRILAWSLS (244 aa). The Extracellular portion of the chain corresponds to 30–304; the sequence is IDFLYNSFSS…SSSLSTGAIA (275 aa). N-linked (GlcNAc...) asparagine glycosylation is found at Asn42, Asn63, Asn121, Asn139, Asn191, Asn219, Asn282, and Asn293. Residues 305-325 form a helical membrane-spanning segment; it reads GIVIGCVVFVALIGFGGYLIW. At 326-656 the chain is on the cytoplasmic side; that stretch reads KKLMREEEEE…AAADSTAAHA (331 aa). The 279-residue stretch at 361–639 folds into the Protein kinase domain; that stretch reads FSNDRLLGSG…LLGSPQEDLL (279 aa). ATP contacts are provided by residues 367 to 375 and Lys389; that span reads LGSGGFGKV. The active-site Proton acceptor is the Asp485.

In the C-terminal section; belongs to the protein kinase superfamily. Ser/Thr protein kinase family. The protein in the N-terminal section; belongs to the leguminous lectin family.

The protein resides in the cell membrane. It catalyses the reaction L-seryl-[protein] + ATP = O-phospho-L-seryl-[protein] + ADP + H(+). The enzyme catalyses L-threonyl-[protein] + ATP = O-phospho-L-threonyl-[protein] + ADP + H(+). In terms of biological role, involved in resistance response to the pathogenic oomycetes Phytophthora infestans and Phytophthora capsici and to the pathogenic bacteria Pseudomonas syringae. The chain is L-type lectin-domain containing receptor kinase S.1 from Arabidopsis thaliana (Mouse-ear cress).